Consider the following 168-residue polypeptide: Large ribosomal subunit protein bL9 (168 aa).

The disordered stretch occupies residues 148 to 168; it reads ENGEGSVQPAAEAAEVASTEA. The segment covering 157–168 has biased composition (low complexity); that stretch reads AAEAAEVASTEA.

The protein belongs to the bacterial ribosomal protein bL9 family.

Its function is as follows. Binds to the 23S rRNA. This chain is Large ribosomal subunit protein bL9, found in Herpetosiphon aurantiacus (strain ATCC 23779 / DSM 785 / 114-95).